The sequence spans 785 residues: uncharacterized protein (785 aa).

The 93-residue stretch at 1 to 93 folds into the PE domain; that stretch reads MSWVMVSPEL…GGAYAAAEAA (93 aa).

This sequence belongs to the mycobacterial PE family. PGRS subfamily.

This is an uncharacterized protein from Mycobacterium tuberculosis (strain CDC 1551 / Oshkosh).